A 156-amino-acid chain; its full sequence is Single-stranded DNA-binding protein 1 (156 aa).

In terms of domain architecture, SSB spans methionine 1–leucine 107. A compositionally biased stretch (low complexity) spans phenylalanine 114–threonine 124. The disordered stretch occupies residues phenylalanine 114–glycine 156.

Homotetramer.

The protein is Single-stranded DNA-binding protein 1 (ssb1) of Streptomyces coelicolor (strain ATCC BAA-471 / A3(2) / M145).